A 203-amino-acid chain; its full sequence is Elongation factor Ts (203 aa).

Residues 80–83 form an involved in Mg(2+) ion dislocation from EF-Tu region; the sequence is TDFV.

This sequence belongs to the EF-Ts family.

It localises to the cytoplasm. In terms of biological role, associates with the EF-Tu.GDP complex and induces the exchange of GDP to GTP. It remains bound to the aminoacyl-tRNA.EF-Tu.GTP complex up to the GTP hydrolysis stage on the ribosome. The polypeptide is Elongation factor Ts (Moorella thermoacetica (strain ATCC 39073 / JCM 9320)).